Consider the following 212-residue polypeptide: Troponin I, cardiac muscle (212 aa).

Residues 1–11 (MADRSGGSTAG) are compositionally biased toward polar residues. The segment at 1–45 (MADRSGGSTAGDTVPAPPPVRRRSSANYRAYATEPHAKKKSKISA) is disordered. Ala-2 carries the post-translational modification N-acetylalanine. At Ser-5 the chain carries Phosphoserine. 2 positions are modified to phosphoserine; by PKA and PKD/PRKD1: Ser-24 and Ser-25. Tyr-28 is modified (phosphotyrosine). Residue Thr-33 is modified to Phosphothreonine; by STK4/MST1. Residues 34-81 (EPHAKKKSKISASRKLQLKTLMLQIAKQELEREAEERRGEKGRALSTR) are involved in binding TNC. Phosphoserine; by PKC/PRKCE is present on residues Ser-44 and Ser-46. Thr-53 carries the phosphothreonine; by STK4/MST1 modification. Phosphoserine is present on Ser-79. Position 80 is a phosphothreonine (Thr-80). An involved in binding TNC and actin region spans residues 131–151 (NQKIFDLRGKFKRPTLRRVRI). Residue Thr-145 is modified to Phosphothreonine; by STK4/MST1. The residue at position 152 (Ser-152) is a Phosphoserine; by PAK3. Position 183 is a phosphothreonine (Thr-183). The residue at position 201 (Ser-201) is a Phosphoserine.

Belongs to the troponin I family. As to quaternary structure, interacts with TRIM63. Binds to actin and tropomyosin. Interacts with STK4/MST1. Post-translationally, phosphorylated at Ser-24 and Ser-25 by PRKD1; phosphorylation reduces myofilament calcium sensitivity. Phosphorylated preferentially at Thr-33. Phosphorylation by STK4/MST1 alters its binding affinity to TNNC1 (cardiac Tn-C) and TNNT2 (cardiac Tn-T). Phosphorylated at Ser-44 and Ser-46 by PRKCE; phosphorylation increases myocardium contractile dysfunction.

Troponin I is the inhibitory subunit of troponin, the thin filament regulatory complex which confers calcium-sensitivity to striated muscle actomyosin ATPase activity. The chain is Troponin I, cardiac muscle (TNNI3) from Bos taurus (Bovine).